A 254-amino-acid polypeptide reads, in one-letter code: H-2 class II histocompatibility antigen, I-E alpha chain (254 aa).

The N-terminal stretch at 1-24 (RSRALILGVLALTTMLSLCGGEDD) is a signal peptide. An alpha-1 region spans residues 25–109 (IEADHVAFYG…KDSNFTPAAN (85 aa)). The Extracellular segment spans residues 25-216 (IEADHVAFYG…IPAPMSELTE (192 aa)). 2 N-linked (GlcNAc...) asparagine glycosylation sites follow: Asn-103 and Asn-143. Residues 110–203 (EAPQATVFPK…GLEEPVLKHW (94 aa)) form an alpha-2 region. The Ig-like C1-type domain occupies 112-204 (PQATVFPKSP…LEEPVLKHWE (93 aa)). A disulfide bond links Cys-132 and Cys-188. The tract at residues 204-216 (EPEIPAPMSELTE) is connecting peptide. The helical transmembrane segment at 217-242 (TVVCALGLSVGLVGIVVGTIFIIQGL) threads the bilayer. The Cytoplasmic segment spans residues 243-254 (RSGGTSRHPGPL).

It belongs to the MHC class II family.

The protein resides in the membrane. The chain is H-2 class II histocompatibility antigen, I-E alpha chain from Mus musculus (Mouse).